The following is a 318-amino-acid chain: uncharacterized protein (318 aa).

It belongs to the NAD(P)-dependent epimerase/dehydratase family.

This is an uncharacterized protein from Staphylococcus epidermidis (strain ATCC 12228 / FDA PCI 1200).